Here is a 198-residue protein sequence, read N- to C-terminus: Na(+)-translocating NADH-quinone reductase subunit E (198 aa).

Helical transmembrane passes span 11–31 (AVFVENMALAFFLGMCTFLAV), 35–55 (VSTASGLGVAVTVVLGLAVPI), 77–97 (FLNFITFIGVIAALVQILEMI), 110–130 (GIFLPLIAVNCAIFGGVSFMV), 140–160 (IVYGFGSGIGWMLAIVAMAGI), and 176–196 (LGITFITTGLMALGFMSFSGV).

Belongs to the NqrDE/RnfAE family. Composed of six subunits; NqrA, NqrB, NqrC, NqrD, NqrE and NqrF.

The protein localises to the cell inner membrane. It catalyses the reaction a ubiquinone + n Na(+)(in) + NADH + H(+) = a ubiquinol + n Na(+)(out) + NAD(+). NQR complex catalyzes the reduction of ubiquinone-1 to ubiquinol by two successive reactions, coupled with the transport of Na(+) ions from the cytoplasm to the periplasm. NqrA to NqrE are probably involved in the second step, the conversion of ubisemiquinone to ubiquinol. This Klebsiella pneumoniae subsp. pneumoniae (strain ATCC 700721 / MGH 78578) protein is Na(+)-translocating NADH-quinone reductase subunit E.